A 283-amino-acid chain; its full sequence is 2-hydroxy-6-oxononadienedioate/2-hydroxy-6-oxononatrienedioate hydrolase (283 aa).

The AB hydrolase-1 domain maps to 35–269 (VVVMFHGSGP…KCGHWAQWEH (235 aa)). His263 functions as the Proton acceptor in the catalytic mechanism.

It belongs to the AB hydrolase superfamily. MhpC family. As to quaternary structure, homodimer.

The catalysed reaction is (2Z,4E)-2-hydroxy-6-oxonona-2,4-dienedioate + H2O = (2Z)-2-hydroxypenta-2,4-dienoate + succinate + H(+). It catalyses the reaction (2Z,4E,7E)-2-hydroxy-6-oxonona-2,4,7-trienedioate + H2O = (2Z)-2-hydroxypenta-2,4-dienoate + fumarate + H(+). It functions in the pathway aromatic compound metabolism; 3-phenylpropanoate degradation. In terms of biological role, catalyzes the cleavage of the C5-C6 bond of 2-hydroxy-6-oxononadienedioate and 2-hydroxy-6-oxononatrienedioate, a dienol ring fission product of the bacterial meta-cleavage pathway for degradation of phenylpropionic acid. The sequence is that of 2-hydroxy-6-oxononadienedioate/2-hydroxy-6-oxononatrienedioate hydrolase from Pseudomonas sp.